The sequence spans 524 residues: Leukotriene-B4 omega-hydroxylase 3 (524 aa).

Residues Glu-328 and Cys-468 each contribute to the heme site.

This sequence belongs to the cytochrome P450 family. It depends on heme as a cofactor.

Its subcellular location is the endoplasmic reticulum membrane. It localises to the microsome membrane. It carries out the reaction leukotriene B4 + reduced [NADPH--hemoprotein reductase] + O2 = 20-hydroxy-leukotriene B4 + oxidized [NADPH--hemoprotein reductase] + H2O + H(+). The protein operates within lipid metabolism; leukotriene B4 degradation. In terms of biological role, cytochromes P450 are a group of heme-thiolate monooxygenases. Catalyzes the omega-hydroxylation of LTB4. The chain is Leukotriene-B4 omega-hydroxylase 3 (Cyp4f14) from Mus musculus (Mouse).